Here is a 112-residue protein sequence, read N- to C-terminus: MIPGEFLLADGEIELNADREGRPFQVTNTGDRPIQVGSHYHFHEVNNALDFDRDAALGLRLDIPAGTAVRFEPGQTRTVSLVPFAGERRVYGFQGRVMGPLPTAPDEPEQTS.

It belongs to the urease beta subunit family. In terms of assembly, heterotrimer of UreA (gamma), UreB (beta) and UreC (alpha) subunits. Three heterotrimers associate to form the active enzyme.

It is found in the cytoplasm. It catalyses the reaction urea + 2 H2O + H(+) = hydrogencarbonate + 2 NH4(+). The protein operates within nitrogen metabolism; urea degradation; CO(2) and NH(3) from urea (urease route): step 1/1. The sequence is that of Urease subunit beta from Thioalkalivibrio sulfidiphilus (strain HL-EbGR7).